The sequence spans 314 residues: Acetaldehyde dehydrogenase 1 (314 aa).

15 to 18 (SGNI) contacts NAD(+). Residue C133 is the Acyl-thioester intermediate of the active site. NAD(+) contacts are provided by residues 164–172 (SAGPGTRAN) and N291.

It belongs to the acetaldehyde dehydrogenase family.

It catalyses the reaction acetaldehyde + NAD(+) + CoA = acetyl-CoA + NADH + H(+). In Paraburkholderia xenovorans (strain LB400), this protein is Acetaldehyde dehydrogenase 1.